Here is an 846-residue protein sequence, read N- to C-terminus: MTLTPEASKSVAQPPTQAPLTQEEAIASLGRYGYGWADSDVAGANAQRGLSEAVVRDISAKKNEPDWMLQSRLKALRIFDRKPIPKWGSNLDGIDFDNIKYFVRSTEKQAASWDDLPEDIRNTYDRLGIPEAEKQRLVAGVAAQYESEVVYHQIREDLEAQGVIFLDTDTGLREHPDIFKEYFGTVIPAGDNKFSALNTAVWSGGSFIYVPPGVHVDIPLQAYFRINTENMGQFERTLIIADEGSYVHYVEGCLPAGELITTADGDLRPIESIRVGDFVTGHDGRPHRVTAVQVRDLDGELFTFTPMSPANAFSVTAEHPLLAIPRDEVRVMRKERNGWKAEVNSTKLRSAEPRWIAAKDVAEGDFLIYPKPKPIPHRTVLPLEFARLAGYYLAEGHACLTNGCESLIFSFHSDEFEYVEDVRQACKSLYEKSGSVLIEEHKHSARVTVYTKAGYAAMRDNVGIGSSNKKLSDLLMRQDETFLRELVDAYVNGDGNVTRRNGAVWKRVHTTSRLWAFQLQSILARLGHYATVELRRPGGPGVIMGRNVVRKDIYQVQWTEGGRGPKQARDCGDYFAVPIKKRAVREAHEPVYNLDVENPDSYLAYGFAVHNCTAPIYKSDSLHSAVVEIIVKPHARVRYTTIQNWSNNVYNLVTKRARAEAGATMEWIDGNIGSKVTMKYPAVWMTGEHAKGEVLSVAFAGEDQHQDTGAKMLHLAPNTSSNIVSKSVARGGGRTSYRGLVQVNKGAHGSRSSVKCDALLVDTVSRSDTYPYVDIREDDVTMGHEATVSKVSENQLFYLMSRGLTEDEAMAMVVRGFVEPIAKELPMEYALELNRLIELQMEGAVG.

Residues 1–20 (MTLTPEASKSVAQPPTQAPL) are disordered. In terms of domain architecture, DOD-type homing endonuclease spans 388–528 (LAGYYLAEGH…LQSILARLGH (141 aa)).

This sequence belongs to the iron-sulfur cluster assembly SufBD family. This protein undergoes a protein self splicing that involves a post-translational excision of the intervening region (intein) followed by peptide ligation.

In Mycobacterium bovis (strain ATCC BAA-935 / AF2122/97), this protein is Iron-sulfur cluster assembly SufBD family protein Mb1496.